The chain runs to 129 residues: Small ribosomal subunit protein uS11 (129 aa).

It belongs to the universal ribosomal protein uS11 family. Part of the 30S ribosomal subunit. Interacts with proteins S7 and S18. Binds to IF-3.

In terms of biological role, located on the platform of the 30S subunit, it bridges several disparate RNA helices of the 16S rRNA. Forms part of the Shine-Dalgarno cleft in the 70S ribosome. The sequence is that of Small ribosomal subunit protein uS11 from Geobacillus thermodenitrificans (strain NG80-2).